Consider the following 217-residue polypeptide: Cytidylate kinase (217 aa).

9–17 (GPSSSGKSS) lines the ATP pocket.

Belongs to the cytidylate kinase family. Type 1 subfamily.

The protein resides in the cytoplasm. The catalysed reaction is CMP + ATP = CDP + ADP. It catalyses the reaction dCMP + ATP = dCDP + ADP. The sequence is that of Cytidylate kinase from Mycoplasma pneumoniae (strain ATCC 29342 / M129 / Subtype 1) (Mycoplasmoides pneumoniae).